Reading from the N-terminus, the 388-residue chain is Pregnancy-associated glycoprotein (388 aa).

An N-terminal signal peptide occupies residues methionine 1–cysteine 15. In terms of domain architecture, Peptidase A1 spans tyrosine 74–alanine 385. Aspartate 92 is a catalytic residue. Disulfide bonds link cysteine 105–cysteine 110 and cysteine 266–cysteine 270. Aspartate 275 is a catalytic residue. An intrachain disulfide couples cysteine 309 to cysteine 344. An N-linked (GlcNAc...) asparagine glycan is attached at asparagine 356.

This sequence belongs to the peptidase A1 family. In terms of tissue distribution, trophoblast and placental tissue.

The protein resides in the secreted. Its subcellular location is the extracellular space. The chain is Pregnancy-associated glycoprotein (PAG) from Equus caballus (Horse).